The sequence spans 295 residues: Small ribosomal subunit biogenesis GTPase RsgA (295 aa).

The CP-type G domain maps to 68-228 (KNLLTKPHVA…VVDTPGFANL (161 aa)). GTP-binding positions include 117 to 120 (NKMD) and 170 to 178 (GLSGVGKSS). Zn(2+) contacts are provided by C250, C255, H257, and C263.

The protein belongs to the TRAFAC class YlqF/YawG GTPase family. RsgA subfamily. As to quaternary structure, monomer. Associates with 30S ribosomal subunit, binds 16S rRNA. It depends on Zn(2+) as a cofactor.

Its subcellular location is the cytoplasm. Functionally, one of several proteins that assist in the late maturation steps of the functional core of the 30S ribosomal subunit. Helps release RbfA from mature subunits. May play a role in the assembly of ribosomal proteins into the subunit. Circularly permuted GTPase that catalyzes slow GTP hydrolysis, GTPase activity is stimulated by the 30S ribosomal subunit. The polypeptide is Small ribosomal subunit biogenesis GTPase RsgA (Thermotoga maritima (strain ATCC 43589 / DSM 3109 / JCM 10099 / NBRC 100826 / MSB8)).